We begin with the raw amino-acid sequence, 50 residues long: Sperm protamine P1 (50 aa).

Belongs to the protamine P1 family. Testis.

The protein resides in the nucleus. It localises to the chromosome. Functionally, protamines substitute for histones in the chromatin of sperm during the haploid phase of spermatogenesis. They compact sperm DNA into a highly condensed, stable and inactive complex. This chain is Sperm protamine P1 (PRM1), found in Chilonatalus micropus (Cuban funnel-eared bat).